We begin with the raw amino-acid sequence, 57 residues long: uncharacterized protein (57 aa).

An N-terminal signal peptide occupies residues 1–24 (MYDTWFVLTAVVLFVLVLIGNVHG).

Prismatic layer of shell (at protein level).

Its subcellular location is the secreted. This is an uncharacterized protein from Margaritifera margaritifera (Freshwater pearl mussel).